A 470-amino-acid polypeptide reads, in one-letter code: Cysteine--tRNA ligase (470 aa).

Residue Cys-28 coordinates Zn(2+). Positions 30–40 (PTVYNYIHIGN) match the 'HIGH' region motif. Zn(2+) is bound by residues Cys-212, His-237, and Glu-241. Positions 271-275 (KMSKS) match the 'KMSKS' region motif. Lys-274 is an ATP binding site.

Belongs to the class-I aminoacyl-tRNA synthetase family. As to quaternary structure, monomer. Requires Zn(2+) as cofactor.

The protein resides in the cytoplasm. It carries out the reaction tRNA(Cys) + L-cysteine + ATP = L-cysteinyl-tRNA(Cys) + AMP + diphosphate. The polypeptide is Cysteine--tRNA ligase (Levilactobacillus brevis (strain ATCC 367 / BCRC 12310 / CIP 105137 / JCM 1170 / LMG 11437 / NCIMB 947 / NCTC 947) (Lactobacillus brevis)).